A 133-amino-acid polypeptide reads, in one-letter code: Serine/threonine-protein kinase RsbT (133 aa).

The enzyme catalyses L-seryl-[protein] + ATP = O-phospho-L-seryl-[protein] + ADP + H(+). It catalyses the reaction L-threonyl-[protein] + ATP = O-phospho-L-threonyl-[protein] + ADP + H(+). Its function is as follows. Provides the crucial link between the upstream module (communication of environmental stress) and the downstream module (integration of the environmental signals with signals of energy stress) that compose the signal transduction pathway controlling the sigma-B factor. Phosphorylates and inactivates its specific antagonist protein RsbS thanks to its serine kinase activity. Upon phosphorylation of RsbS, RsbT is released to stimulate RsbU, a PP2C phosphatase, thereby initiating the signaling cascade that ultimately activates sigma-B. The activity of the RsbU phosphatase may be stimulated by a long-lived interaction with RsbT and the serine kinase function of RsbT is not required to directly modify RsbU. Also phosphorylates RsbR thanks to its threonine kinase activity, preventing it to phosphorylate RsbT. This chain is Serine/threonine-protein kinase RsbT (rsbT), found in Bacillus subtilis (strain 168).